We begin with the raw amino-acid sequence, 345 residues long: uncharacterized protein (345 aa).

3 Solcar repeats span residues 80-153 (MSFF…MKSR), 162-246 (SDPQ…LKLK), and 256-339 (NLAH…ILNF). The next 6 membrane-spanning stretches (helical) occupy residues 83–103 (FEALGAGICAGLAVDLSLFPI), 128–148 (GLGSILVGSAPGASLFFTTYE), 220–240 (AGYGITIAREIPFTLIQFPIW), 262–282 (AISGSIAGGIAAALTTPFDVV), 296–316 (VFTIKSIVAHEGFLALYKGIV), and 319–339 (VLWLSGGGAIFLGCYDVILNF).

The protein belongs to the mitochondrial carrier (TC 2.A.29) family.

The protein resides in the mitochondrion inner membrane. This is an uncharacterized protein from Schizosaccharomyces pombe (strain 972 / ATCC 24843) (Fission yeast).